Here is a 311-residue protein sequence, read N- to C-terminus: MHPQVASLFDNVYEDLAAATLEFIGTAFFLLFGLGGIQASTAEDTASSQPPASGIEHVLYISTCMGFSLVVSAWLFFRVTGGLFNPNISFALLLVGGLKPLRFVLFCIAQLTGAIAGAAIVRGLTSAPLSVNNVLQQGTSAAQGVFIEMFITAALVLSVLMLAAEKHEATPFAPVGIGLTLFACHLFAVYYTGAAMNSARAFGPAVISGFPEPQHWVYWVGPFLGSLLGAGFYATLKHYKYWRLNPDQATSDYRKSPSDPVALLKSTAETFINVGDEETRNGCASNEEGVRATGDEKSSNATSSRTNFSPV.

Over 1-16 (MHPQVASLFDNVYEDL) the chain is Cytoplasmic. Residues 17 to 37 (AAATLEFIGTAFFLLFGLGGI) traverse the membrane as a helical segment. Over 38-56 (QASTAEDTASSQPPASGIE) the chain is Extracellular. The chain crosses the membrane as a helical span at residues 57-77 (HVLYISTCMGFSLVVSAWLFF). Position 78 (Arg-78) is a topological domain, cytoplasmic. Residues 79-99 (VTGGLFNPNISFALLLVGGLK) traverse the membrane as a helical segment. The short motif at 85–87 (NPN) is the NPA 1 element. Pro-100 is a topological domain (extracellular). Residues 101 to 121 (LRFVLFCIAQLTGAIAGAAIV) form a helical membrane-spanning segment. Topologically, residues 122–143 (RGLTSAPLSVNNVLQQGTSAAQ) are cytoplasmic. A helical transmembrane segment spans residues 144-164 (GVFIEMFITAALVLSVLMLAA). At 165–168 (EKHE) the chain is on the extracellular side. The chain crosses the membrane as a helical span at residues 169–189 (ATPFAPVGIGLTLFACHLFAV). At 190-215 (YYTGAAMNSARAFGPAVISGFPEPQH) the chain is on the cytoplasmic side. Positions 197–199 (NSA) match the NPA 2 motif. The helical transmembrane segment at 216–236 (WVYWVGPFLGSLLGAGFYATL) threads the bilayer. The Extracellular segment spans residues 237 to 311 (KHYKYWRLNP…TSSRTNFSPV (75 aa)). Positions 276–311 (DEETRNGCASNEEGVRATGDEKSSNATSSRTNFSPV) are disordered. Over residues 288-298 (EGVRATGDEKS) the composition is skewed to basic and acidic residues. Polar residues predominate over residues 299-311 (SNATSSRTNFSPV). A glycan (N-linked (GlcNAc...) asparagine) is linked at Asn-300.

It belongs to the MIP/aquaporin (TC 1.A.8) family.

It is found in the cell membrane. It catalyses the reaction H2O(in) = H2O(out). The catalysed reaction is H2O2(out) = H2O2(in). The enzyme catalyses nitric oxide(out) = nitric oxide(in). It carries out the reaction CO2(out) = CO2(in). Its function is as follows. Water channel required to facilitate the transport of water across membranes. Also mediates the transport nitric oxide, hydrogen peroxide and carbon dioxide across the membrane. Required for Hartig net development in trembling aspen trees. Contributes in fungal cellular processes during the basidiocarp formation. This Laccaria bicolor (Bicoloured deceiver) protein is Aquaporin-1.